Consider the following 171-residue polypeptide: MTKFNFDQVHSDIQFKIKHLMVSQVKGTFKQFDVQLDGDINDLTSLKATATIIPSSIDTQNEDRDNHLRSNDFFGTEDNDKMTFVTKEINENQVVGDLTIKGETHEETFDVEFNGVSKNPMNGQQVTGFIVSGTINREKYGINFNQALETGGVMLGKNVKFEASAEFSIDN.

This sequence belongs to the UPF0312 family.

This chain is UPF0312 protein SE_0264, found in Staphylococcus epidermidis (strain ATCC 12228 / FDA PCI 1200).